A 352-amino-acid chain; its full sequence is Quinolinate synthase (352 aa).

Positions 55 and 72 each coordinate iminosuccinate. Cys-117 contributes to the [4Fe-4S] cluster binding site. Iminosuccinate-binding positions include 143 to 145 and Ser-160; that span reads YVN. Cys-204 provides a ligand contact to [4Fe-4S] cluster. Residues 230–232 and Thr-258 each bind iminosuccinate; that span reads HPE. Cys-303 contributes to the [4Fe-4S] cluster binding site.

Belongs to the quinolinate synthase family. Type 2 subfamily. Requires [4Fe-4S] cluster as cofactor.

Its subcellular location is the cytoplasm. It carries out the reaction iminosuccinate + dihydroxyacetone phosphate = quinolinate + phosphate + 2 H2O + H(+). The protein operates within cofactor biosynthesis; NAD(+) biosynthesis; quinolinate from iminoaspartate: step 1/1. In terms of biological role, catalyzes the condensation of iminoaspartate with dihydroxyacetone phosphate to form quinolinate. The polypeptide is Quinolinate synthase (Mycobacterium leprae (strain Br4923)).